Here is a 200-residue protein sequence, read N- to C-terminus: Putative 3-methyladenine DNA glycosylase (200 aa).

It belongs to the DNA glycosylase MPG family.

The sequence is that of Putative 3-methyladenine DNA glycosylase from Shouchella clausii (strain KSM-K16) (Alkalihalobacillus clausii).